A 421-amino-acid polypeptide reads, in one-letter code: Phosphoribosylamine--glycine ligase (421 aa).

The ATP-grasp domain maps to 108 to 314 (KEIMVKYNVP…FAQNIDDIMM (207 aa)). 134 to 195 (IEEQGAPIVV…EEFLDGEEFS (62 aa)) provides a ligand contact to ATP. Mg(2+) is bound by residues Glu284 and Asn286.

This sequence belongs to the GARS family. It depends on Mg(2+) as a cofactor. Mn(2+) serves as cofactor.

The catalysed reaction is 5-phospho-beta-D-ribosylamine + glycine + ATP = N(1)-(5-phospho-beta-D-ribosyl)glycinamide + ADP + phosphate + H(+). It participates in purine metabolism; IMP biosynthesis via de novo pathway; N(1)-(5-phospho-D-ribosyl)glycinamide from 5-phospho-alpha-D-ribose 1-diphosphate: step 2/2. The polypeptide is Phosphoribosylamine--glycine ligase (Streptococcus pyogenes serotype M3 (strain SSI-1)).